A 205-amino-acid polypeptide reads, in one-letter code: Cerebellin-3 (205 aa).

The N-terminal stretch at 1 to 32 (MLGTKRHWPPGPSLSLELPLALTLLALRAGWA) is a signal peptide. Residues 67-205 (APPGRVAFAA…SFSGFLIFPL (139 aa)) enclose the C1q domain. N-linked (GlcNAc...) asparagine glycosylation is present at Asn90.

As to quaternary structure, heterohexamer; disulfide-linked heterotrimers. Interacts with CBLN1. May also form oligomers with CBLN2 and CBLN4.

Its subcellular location is the endoplasmic reticulum. The protein localises to the golgi apparatus. It localises to the cis-Golgi network. It is found in the secreted. The protein resides in the synapse. May be involved in synaptic functions in the CNS. This chain is Cerebellin-3 (CBLN3), found in Bos taurus (Bovine).